A 108-amino-acid chain; its full sequence is Peptidyl-prolyl cis-trans isomerase FKBP1B (108 aa).

Residues 20–108 form the PPIase FKBP-type domain; that stretch reads GQTCVVHYTG…IFDVELLNLE (89 aa).

As to quaternary structure, identified in a complex composed of RYR2, FKBP1B, PKA catalytic subunit, PRKAR2A, AKAP6, and the protein phosphatases PP2A and PP1. Interacts directly with RYR2.

The protein localises to the cytoplasm. The protein resides in the sarcoplasmic reticulum. It catalyses the reaction [protein]-peptidylproline (omega=180) = [protein]-peptidylproline (omega=0). With respect to regulation, inhibited by both FK506 and rapamycin. Has the potential to contribute to the immunosuppressive and toxic effects of FK506 and rapamycin. PPIases accelerate the folding of proteins. It catalyzes the cis-trans isomerization of proline imidic peptide bonds in oligopeptides. In Bos taurus (Bovine), this protein is Peptidyl-prolyl cis-trans isomerase FKBP1B (FKBP1B).